The sequence spans 156 residues: MKLQLVAVGTKMPDWVQTGFIDYLRRFPKDMPFDLVEIPAGKRGKNADIKRILEKEGELMLAAVGKNNRIVTLDIPGTLWETPQLAQQLERWKQDGRDVSLLIGGPEGLAQACKAAAEQSWSLSPLTLPHPLVRVLVAESLYRAWSITTNHPYHRE.

S-adenosyl-L-methionine-binding positions include L73, G104, and 123-128 (LSPLTL).

It belongs to the RNA methyltransferase RlmH family. Homodimer.

It localises to the cytoplasm. The enzyme catalyses pseudouridine(1915) in 23S rRNA + S-adenosyl-L-methionine = N(3)-methylpseudouridine(1915) in 23S rRNA + S-adenosyl-L-homocysteine + H(+). Its function is as follows. Specifically methylates the pseudouridine at position 1915 (m3Psi1915) in 23S rRNA. This is Ribosomal RNA large subunit methyltransferase H from Yersinia enterocolitica serotype O:8 / biotype 1B (strain NCTC 13174 / 8081).